The sequence spans 529 residues: CTP synthase (529 aa).

The amidoligase domain stretch occupies residues 1–270; it reads MKYIVVTGGV…ADVVCSYLSL (270 aa). CTP is bound at residue Ser-12. Residue Ser-12 participates in UTP binding. ATP contacts are provided by residues 13 to 18 and Asp-70; that span reads GLGKGI. Mg(2+)-binding residues include Asp-70 and Glu-145. CTP-binding positions include 152–154, 191–196, and Lys-227; these read DIE and KTKPTQ. UTP-binding positions include 191–196 and Lys-227; that span reads KTKPTQ. Residue 243-245 coordinates ATP; that stretch reads KDA. Residues 293 to 525 form the Glutamine amidotransferase type-1 domain; sequence VAIVSKYGIE…VEACKKNKSS (233 aa). Gly-349 provides a ligand contact to L-glutamine. Residue Cys-376 is the Nucleophile; for glutamine hydrolysis of the active site. Residues 377 to 380, Glu-400, and Arg-455 contribute to the L-glutamine site; that span reads LGFQ. Catalysis depends on residues His-498 and Glu-500.

This sequence belongs to the CTP synthase family. In terms of assembly, homotetramer.

It catalyses the reaction UTP + L-glutamine + ATP + H2O = CTP + L-glutamate + ADP + phosphate + 2 H(+). It carries out the reaction L-glutamine + H2O = L-glutamate + NH4(+). The catalysed reaction is UTP + NH4(+) + ATP = CTP + ADP + phosphate + 2 H(+). It participates in pyrimidine metabolism; CTP biosynthesis via de novo pathway; CTP from UDP: step 2/2. Its activity is regulated as follows. Allosterically activated by GTP, when glutamine is the substrate; GTP has no effect on the reaction when ammonia is the substrate. The allosteric effector GTP functions by stabilizing the protein conformation that binds the tetrahedral intermediate(s) formed during glutamine hydrolysis. Inhibited by the product CTP, via allosteric rather than competitive inhibition. Functionally, catalyzes the ATP-dependent amination of UTP to CTP with either L-glutamine or ammonia as the source of nitrogen. Regulates intracellular CTP levels through interactions with the four ribonucleotide triphosphates. The polypeptide is CTP synthase (Methanoculleus marisnigri (strain ATCC 35101 / DSM 1498 / JR1)).